Reading from the N-terminus, the 703-residue chain is Lactococcin-G-processing and transport ATP-binding protein LagD (703 aa).

The region spanning 7 to 132 (QQDEKDCGVA…KEWTGVLLFP (126 aa)) is the Peptidase C39 domain. Cysteine 13 is a catalytic residue. In terms of domain architecture, ABC transmembrane type-1 spans 153–435 (PILIKQKSLF…IINLQVKMQK (283 aa)). The next 7 helical transmembrane spans lie at 162 to 182 (FITIFGIISSYYFQGLLDNII), 189 to 209 (TLNILSIGLIFVYLFRVLFEY), 224 to 244 (MSIMLGYFKHVLSLPLSFFAT), 267 to 287 (ATLSLILDIGMVILVGTTLAI), 291 to 311 (QLFLLTLAFLPFYILVVYVFI), 381 to 401 (MVIELISSVLILWLGSSYVID), and 409 to 429 (LITYNALLVFFTEPLQNIINL). Residues 469–703 (IKLDKVSFSY…EGVYRRLLNA (235 aa)) form the ABC transporter domain. Residue 502–509 (GVSGSGKS) participates in ATP binding.

The protein belongs to the ABC transporter superfamily. LagD family. As to quaternary structure, homodimer.

The protein localises to the cell membrane. In terms of biological role, lagD (TC 3.A.1) is involved in processing the signal peptide and probably also in export of the bacteriocin lactococcin G. In Lactococcus lactis subsp. lactis (Streptococcus lactis), this protein is Lactococcin-G-processing and transport ATP-binding protein LagD (lagD).